Reading from the N-terminus, the 301-residue chain is Tegument protein VP22 (301 aa).

The interval 1–171 (MTSRRSVKSG…PTRSKTPAQG (171 aa)) is disordered. Positions 113 to 124 (RTPTTAPRAPRT) are enriched in low complexity. Positions 163–166 (TRSK) match the Nuclear localization signal motif. The interaction with gE stretch occupies residues 174–267 (RKLHFSTAPP…LVNPDVVQDV (94 aa)). The Nuclear export signal motif lies at 232–244 (LNELLGITTIRVT). Over residues 269-281 (AATATRGRSAASR) the composition is skewed to low complexity. A disordered region spans residues 269–301 (AATATRGRSAASRPTERPRAPARSASRPRRPVE).

It belongs to the alphaherpesvirinae VP22 tegument protein family. As to quaternary structure, interacts with gE (via C-terminus); this interaction is necessary for the recruitment of VP22 to the Golgi and its packaging into virions. Interacts with gM (via C-terminus). Interacts with VP16; this interaction allows the formation of a tripartite complex composed of VP16, VP22 and UL41/VHS. According to a report interacts with gD (via C-terminus). According another publication, does not interact with gD. Interacts with host CGAS. Interacts with host SET; this interaction may interfere with SET-mediated nucleosomal deposition onto the viral genome. Interacts with the capsid-binding protein UL16. Post-translationally, highly phosphorylated in the host cell. Packaging is selective for underphosphorylated forms.

The protein localises to the virion tegument. It is found in the host cytoplasm. It localises to the host nucleus. The protein resides in the host Golgi apparatus. Tegument protein that plays different roles during the time course of infection. Participates in both the accumulation of viral mRNAs and viral protein translation at late time of infection. Modulates the RNase activity of the virion host shutoff protein UL41 probably to ensure necessary levels of key cellular mRNAs and proteins. Plays a role in microtubule reorganization that occurs after viral infection by stabilizing microtubule network. Finally, may prevent nucleosomal deposition onto the viral genome by interacting with and inhibiting host SET. Plays a role in the inhibition of host innate immune system by targeting the CGAS enzymatic activity which is the principal cytosolic DNA sensor that detects invading viral DNA. Acts by mediating disruption of liquid-like droplets in which CGAS is activated, thereby preventing CGAS activity. In Human herpesvirus 1 (strain 17) (HHV-1), this protein is Tegument protein VP22.